We begin with the raw amino-acid sequence, 199 residues long: NAD(P)H dehydrogenase (quinone) (199 aa).

The Flavodoxin-like domain maps to 4 to 190; the sequence is ILVLYYSSWG…EGARFQGKRL (187 aa). FMN-binding positions include 10–15 and 78–80; these read SSWGHM and TRY. Tryptophan 12 lines the NAD(+) pocket. Tryptophan 98 provides a ligand contact to substrate. FMN-binding positions include 113 to 119 and histidine 134; that span reads STATQHG. Residues 155-175 are disordered; sequence VRGGAPYGMTTTSDTDGSRMP.

Belongs to the WrbA family. It depends on FMN as a cofactor.

The catalysed reaction is a quinone + NADH + H(+) = a quinol + NAD(+). It catalyses the reaction a quinone + NADPH + H(+) = a quinol + NADP(+). The polypeptide is NAD(P)H dehydrogenase (quinone) (Chelativorans sp. (strain BNC1)).